A 64-amino-acid polypeptide reads, in one-letter code: Large ribosomal subunit protein uL29 (64 aa).

The protein belongs to the universal ribosomal protein uL29 family.

The sequence is that of Large ribosomal subunit protein uL29 from Nitrosomonas europaea (strain ATCC 19718 / CIP 103999 / KCTC 2705 / NBRC 14298).